The following is a 123-amino-acid chain: Small ribosomal subunit protein bS16 (123 aa).

The tract at residues 86–123 is disordered; sequence PVRAEQTKQPQPKAKAQQRAKDQAERDAAAAAEAAAGE. Residues 93–102 show a composition bias toward low complexity; it reads KQPQPKAKAQ. The segment covering 104 to 113 has biased composition (basic and acidic residues); that stretch reads RAKDQAERDA. The span at 114-123 shows a compositional bias: low complexity; sequence AAAAEAAAGE.

It belongs to the bacterial ribosomal protein bS16 family.

This is Small ribosomal subunit protein bS16 from Paramagnetospirillum magneticum (strain ATCC 700264 / AMB-1) (Magnetospirillum magneticum).